Consider the following 138-residue polypeptide: Basic phospholipase A2 DsM-b1/DsM-b1' (138 aa).

Positions M1–G16 are cleaved as a signal peptide. Cystine bridges form between C42–C131, C44–C60, C59–C111, C65–C138, C66–C104, C73–C97, and C91–C102. Ca(2+) contacts are provided by Y43, G45, and G47. H63 is a catalytic residue. Ca(2+) is bound at residue D64. Residue D105 is part of the active site.

It depends on Ca(2+) as a cofactor. In terms of tissue distribution, expressed by the venom gland.

It is found in the secreted. The enzyme catalyses a 1,2-diacyl-sn-glycero-3-phosphocholine + H2O = a 1-acyl-sn-glycero-3-phosphocholine + a fatty acid + H(+). Exhibits high hydrolytic activities and shows strong preference for the anionic micelles (dPPC with deoxycholate) to the zwitterionic micelles (dPPC with Triton X-100). PLA2 catalyzes the calcium-dependent hydrolysis of the 2-acyl groups in 3-sn-phosphoglycerides. The sequence is that of Basic phospholipase A2 DsM-b1/DsM-b1' from Daboia siamensis (Eastern Russel's viper).